Consider the following 115-residue polypeptide: Large ribosomal subunit protein uL24 (115 aa).

It belongs to the universal ribosomal protein uL24 family. Part of the 50S ribosomal subunit.

One of two assembly initiator proteins, it binds directly to the 5'-end of the 23S rRNA, where it nucleates assembly of the 50S subunit. In terms of biological role, one of the proteins that surrounds the polypeptide exit tunnel on the outside of the subunit. This chain is Large ribosomal subunit protein uL24, found in Phytoplasma mali (strain AT).